Consider the following 109-residue polypeptide: Putative membrane protein insertion efficiency factor (109 aa).

It belongs to the UPF0161 family.

It is found in the cell inner membrane. In terms of biological role, could be involved in insertion of integral membrane proteins into the membrane. The sequence is that of Putative membrane protein insertion efficiency factor from Rhodopseudomonas palustris (strain BisA53).